Reading from the N-terminus, the 662-residue chain is DNA ligase (662 aa).

Residues 31-35 (DSEYD), 79-80 (SL), and glutamate 119 each bind NAD(+). Lysine 121 acts as the N6-AMP-lysine intermediate in catalysis. Residues arginine 142, glutamate 176, lysine 288, and lysine 312 each contribute to the NAD(+) site. Positions 405, 408, 421, and 427 each coordinate Zn(2+). Residues 583 to 662 (NIEKKLDNLT…DELNSFLDNL (80 aa)) form the BRCT domain.

This sequence belongs to the NAD-dependent DNA ligase family. LigA subfamily. Requires Mg(2+) as cofactor. It depends on Mn(2+) as a cofactor.

The enzyme catalyses NAD(+) + (deoxyribonucleotide)n-3'-hydroxyl + 5'-phospho-(deoxyribonucleotide)m = (deoxyribonucleotide)n+m + AMP + beta-nicotinamide D-nucleotide.. In terms of biological role, DNA ligase that catalyzes the formation of phosphodiester linkages between 5'-phosphoryl and 3'-hydroxyl groups in double-stranded DNA using NAD as a coenzyme and as the energy source for the reaction. It is essential for DNA replication and repair of damaged DNA. The protein is DNA ligase of Finegoldia magna (strain ATCC 29328 / DSM 20472 / WAL 2508) (Peptostreptococcus magnus).